The following is a 474-amino-acid chain: Tocopherol cyclase, chloroplastic (474 aa).

The transit peptide at 1 to 65 directs the protein to the chloroplast; the sequence is MNLAVAAALP…TPTPQDRSLR (65 aa).

As to expression, present in all green tissues, both in bundle sheath and in mesophyll cells.

The protein localises to the plastid. Its subcellular location is the chloroplast. It catalyses the reaction gamma-tocopherol = 2,3-dimethyl-6-phytylbenzene-1,4-diol. The protein operates within cofactor biosynthesis; tocopherol biosynthesis. Its function is as follows. Involved in the synthesis of tocopherols (vitamin E), which presumably protect photosynthetic complexes from oxidative stress. Catalyzes the conversion of 2,3-dimethyl-5-phytyl-1,4-hydroquinone (DMPQ) to gamma-tocopherol. This is Tocopherol cyclase, chloroplastic from Zea mays (Maize).